The primary structure comprises 165 residues: uncharacterized protein (165 aa).

A helical membrane pass occupies residues 20–40 (INLIASIVLWLLFVITVIGTF). A glycan (N-linked (GlcNAc...) asparagine; by host) is linked at Asn51. A helical membrane pass occupies residues 97-117 (VGIIVILIFMLMIIMNGFYQM).

Its subcellular location is the membrane. This is an uncharacterized protein from Acanthamoeba polyphaga (Amoeba).